Reading from the N-terminus, the 143-residue chain is Probable cyclic pyranopterin monophosphate synthase (143 aa).

Substrate is bound by residues 61-63 (MCH) and 97-98 (ME). Aspartate 112 is a catalytic residue.

It belongs to the MoaC family. In terms of assembly, homohexamer; trimer of dimers.

It carries out the reaction (8S)-3',8-cyclo-7,8-dihydroguanosine 5'-triphosphate = cyclic pyranopterin phosphate + diphosphate. It participates in cofactor biosynthesis; molybdopterin biosynthesis. Functionally, catalyzes the conversion of (8S)-3',8-cyclo-7,8-dihydroguanosine 5'-triphosphate to cyclic pyranopterin monophosphate (cPMP). This Sulfolobus acidocaldarius (strain ATCC 33909 / DSM 639 / JCM 8929 / NBRC 15157 / NCIMB 11770) protein is Probable cyclic pyranopterin monophosphate synthase.